The following is a 155-amino-acid chain: MLGRMTRNQLTEQIVVARLAKGLTWQELADAIGRPLLWTTSALLGQHPIPAELGRILVDKLGLDESAVPVLAAPPMRGGLPTAVPTDPTIYRFYEALQVYGGALKEVIAEQFGDGIMSAINFSVDLQKKPHPSGDRVVVTFDGKFLPYQWVSSEQ.

Residues arginine 92, glutamate 95, and serine 118 contribute to the active site.

This sequence belongs to the cyanase family.

It carries out the reaction cyanate + hydrogencarbonate + 3 H(+) = NH4(+) + 2 CO2. Catalyzes the reaction of cyanate with bicarbonate to produce ammonia and carbon dioxide. This Mycobacterium avium (strain 104) protein is Cyanate hydratase.